Here is a 469-residue protein sequence, read N- to C-terminus: MNTNQRIITIGTICLIVGIISLLLQIGNIISLWISHSIQTREKNHPEVCNQSVITYENNTWVNQTYVNISNANIVAGQGVTSIILAGNSPLCPISGWAIYSKDNSIRIGSKGDIFVMREPFISCSHLECRTFFLTQGALLNDKHSNGTVKDRSPYRTLMSCPIGEAPSPYNSRFESVAWSASACHDGMGWLTIGISGPDNGAVAVLKYNGIITDTIKSWRNKILRTQESECVCINGSCFTIMTDGPSNGQASYKIFKMEKGRIIKSIELDAPNYHYEECSCYPDTGKVVCVCRDNWHASNRPWVSFDQNLNYQIGYICSGVFGDNPRSNDGKGNCGPVLSNGANGVKGFSFRYGNGVWIGRTKSISSRSGFEMIWDPNGWTETDSSFSMKQDIIASTDWSGYSGSFVQHPELTGMDCIRPCFWVELIRGQPKESTIWTSGSSISFCGVNSGTANWSWPDGADLPFTIDK.

Residues 1–6 (MNTNQR) are Intravirion-facing. The chain crosses the membrane as a helical span at residues 7–27 (IITIGTICLIVGIISLLLQIG). The interval 11–33 (GTICLIVGIISLLLQIGNIISLW) is involved in apical transport and lipid raft association. The Virion surface portion of the chain corresponds to 28-469 (NIISLWISHS…GADLPFTIDK (442 aa)). The hypervariable stalk region stretch occupies residues 36–90 (HSIQTREKNHPEVCNQSVITYENNTWVNQTYVNISNANIVAGQGVTSIILAGNSP). 4 N-linked (GlcNAc...) asparagine; by host glycosylation sites follow: Asn50, Asn58, Asn63, and Asn68. Residues 91–469 (LCPISGWAIY…GADLPFTIDK (379 aa)) form a head of neuraminidase region. 8 cysteine pairs are disulfide-bonded: Cys92–Cys417, Cys124–Cys129, Cys184–Cys231, Cys233–Cys238, Cys279–Cys292, Cys281–Cys290, Cys318–Cys335, and Cys421–Cys446. Arg118 provides a ligand contact to substrate. Asn146 carries N-linked (GlcNAc...) asparagine; by host glycosylation. Residue Asp151 is the Proton donor/acceptor of the active site. Residue Arg152 coordinates substrate. Asn235 is a glycosylation site (N-linked (GlcNAc...) asparagine; by host). Residue 277–278 (EE) participates in substrate binding. A substrate-binding site is contributed by Arg293. Ca(2+) is bound by residues Asp294, Asp324, and Asn344. Arg368 contacts substrate. Tyr402 serves as the catalytic Nucleophile. The N-linked (GlcNAc...) asparagine; by host glycan is linked to Asn454.

It belongs to the glycosyl hydrolase 34 family. As to quaternary structure, homotetramer. The cofactor is Ca(2+). N-glycosylated.

Its subcellular location is the virion membrane. The protein resides in the host apical cell membrane. The enzyme catalyses Hydrolysis of alpha-(2-&gt;3)-, alpha-(2-&gt;6)-, alpha-(2-&gt;8)- glycosidic linkages of terminal sialic acid residues in oligosaccharides, glycoproteins, glycolipids, colominic acid and synthetic substrates.. With respect to regulation, inhibited by the neuraminidase inhibitors zanamivir (Relenza) and oseltamivir (Tamiflu). These drugs interfere with the release of progeny virus from infected cells and are effective against all influenza strains. Resistance to neuraminidase inhibitors is quite rare. Functionally, catalyzes the removal of terminal sialic acid residues from viral and cellular glycoconjugates. Cleaves off the terminal sialic acids on the glycosylated HA during virus budding to facilitate virus release. Additionally helps virus spread through the circulation by further removing sialic acids from the cell surface. These cleavages prevent self-aggregation and ensure the efficient spread of the progeny virus from cell to cell. Otherwise, infection would be limited to one round of replication. Described as a receptor-destroying enzyme because it cleaves a terminal sialic acid from the cellular receptors. May facilitate viral invasion of the upper airways by cleaving the sialic acid moieties on the mucin of the airway epithelial cells. Likely to plays a role in the budding process through its association with lipid rafts during intracellular transport. May additionally display a raft-association independent effect on budding. Plays a role in the determination of host range restriction on replication and virulence. Sialidase activity in late endosome/lysosome traffic seems to enhance virus replication. The sequence is that of Neuraminidase from Influenza A virus (strain A/Swine/Wisconsin/1/1967 H1N1).